We begin with the raw amino-acid sequence, 412 residues long: Short-chain specific acyl-CoA dehydrogenase, mitochondrial (412 aa).

The transit peptide at Met1 to Arg24 directs the protein to the mitochondrion. A Phosphothreonine modification is found at Thr27. Lys51 bears the N6-acetyllysine; alternate mark. Position 51 is an N6-succinyllysine; alternate (Lys51). Lys72 is subject to N6-acetyllysine. Lys129 carries the post-translational modification N6-acetyllysine; alternate. Residue Lys129 is modified to N6-succinyllysine; alternate. FAD-binding positions include Phe152–Ser161 and Trp185–Thr187. Ser161 lines the substrate pocket. An N6-acetyllysine modification is found at Lys208. Lys262 carries the N6-acetyllysine; alternate modification. Position 262 is an N6-succinyllysine; alternate (Lys262). Asp269–Arg272 lines the substrate pocket. N6-acetyllysine is present on Lys292. Arg297 provides a ligand contact to FAD. N6-acetyllysine; alternate is present on Lys306. Lys306 bears the N6-succinyllysine; alternate mark. Residue Gln365–Gly369 coordinates FAD. Glu392 acts as the Proton acceptor in catalysis. FAD is bound at residue Thr394 to Glu396.

This sequence belongs to the acyl-CoA dehydrogenase family. Homotetramer. Requires FAD as cofactor.

It localises to the mitochondrion matrix. The enzyme catalyses a short-chain 2,3-saturated fatty acyl-CoA + oxidized [electron-transfer flavoprotein] + H(+) = a short-chain (2E)-enoyl-CoA + reduced [electron-transfer flavoprotein]. It catalyses the reaction butanoyl-CoA + oxidized [electron-transfer flavoprotein] + H(+) = (2E)-butenoyl-CoA + reduced [electron-transfer flavoprotein]. It carries out the reaction pentanoyl-CoA + oxidized [electron-transfer flavoprotein] + H(+) = (2E)-pentenoyl-CoA + reduced [electron-transfer flavoprotein]. The catalysed reaction is hexanoyl-CoA + oxidized [electron-transfer flavoprotein] + H(+) = (2E)-hexenoyl-CoA + reduced [electron-transfer flavoprotein]. Its pathway is lipid metabolism; mitochondrial fatty acid beta-oxidation. Functionally, short-chain specific acyl-CoA dehydrogenase is one of the acyl-CoA dehydrogenases that catalyze the first step of mitochondrial fatty acid beta-oxidation, an aerobic process breaking down fatty acids into acetyl-CoA and allowing the production of energy from fats. The first step of fatty acid beta-oxidation consists in the removal of one hydrogen from C-2 and C-3 of the straight-chain fatty acyl-CoA thioester, resulting in the formation of trans-2-enoyl-CoA. Among the different mitochondrial acyl-CoA dehydrogenases, short-chain specific acyl-CoA dehydrogenase acts specifically on acyl-CoAs with saturated 4 to 6 carbons long primary chains. In Rattus norvegicus (Rat), this protein is Short-chain specific acyl-CoA dehydrogenase, mitochondrial (Acads).